Consider the following 212-residue polypeptide: Proteasome subunit beta 2 (212 aa).

The propeptide at 1–13 (MSVDEKVARALKG) is removed in mature form; by autocatalysis. Residue Thr14 is the Nucleophile of the active site.

It belongs to the peptidase T1B family. As to quaternary structure, the 20S proteasome core is composed of 14 alpha and 14 beta subunits that assemble into four stacked heptameric rings, resulting in a barrel-shaped structure. The two inner rings, each composed of seven catalytic beta subunits, are sandwiched by two outer rings, each composed of seven alpha subunits. The catalytic chamber with the active sites is on the inside of the barrel. Has a gated structure, the ends of the cylinder being occluded by the N-termini of the alpha-subunits. Is capped at one or both ends by the proteasome regulatory ATPase, PAN.

Its subcellular location is the cytoplasm. It carries out the reaction Cleavage of peptide bonds with very broad specificity.. Its activity is regulated as follows. The formation of the proteasomal ATPase PAN-20S proteasome complex, via the docking of the C-termini of PAN into the intersubunit pockets in the alpha-rings, triggers opening of the gate for substrate entry. Interconversion between the open-gate and close-gate conformations leads to a dynamic regulation of the 20S proteasome proteolysis activity. Its function is as follows. Component of the proteasome core, a large protease complex with broad specificity involved in protein degradation. The polypeptide is Proteasome subunit beta 2 (Ignicoccus hospitalis (strain KIN4/I / DSM 18386 / JCM 14125)).